The sequence spans 146 residues: Large ribosomal subunit protein uL15 (146 aa).

Residues 1 to 46 are disordered; that stretch reads MKLHELQPAPGSRKKAVRVGRGIGSGNGKTAGRGHKGQKARSGGGV. A compositionally biased stretch (gly residues) spans 21-31; the sequence is RGIGSGNGKTA.

This sequence belongs to the universal ribosomal protein uL15 family. As to quaternary structure, part of the 50S ribosomal subunit.

In terms of biological role, binds to the 23S rRNA. In Geobacillus thermodenitrificans (strain NG80-2), this protein is Large ribosomal subunit protein uL15.